Reading from the N-terminus, the 305-residue chain is tRNA dimethylallyltransferase 1 (305 aa).

Residue 10-17 coordinates ATP; that stretch reads GPTASGKS. 12 to 17 provides a ligand contact to substrate; the sequence is TASGKS. Residues 35 to 38 form an interaction with substrate tRNA region; sequence DSLT.

Belongs to the IPP transferase family. As to quaternary structure, monomer. Mg(2+) is required as a cofactor.

It carries out the reaction adenosine(37) in tRNA + dimethylallyl diphosphate = N(6)-dimethylallyladenosine(37) in tRNA + diphosphate. Catalyzes the transfer of a dimethylallyl group onto the adenine at position 37 in tRNAs that read codons beginning with uridine, leading to the formation of N6-(dimethylallyl)adenosine (i(6)A). This chain is tRNA dimethylallyltransferase 1, found in Trichlorobacter lovleyi (strain ATCC BAA-1151 / DSM 17278 / SZ) (Geobacter lovleyi).